We begin with the raw amino-acid sequence, 427 residues long: Glutamate-1-semialdehyde 2,1-aminomutase (427 aa).

K265 is modified (N6-(pyridoxal phosphate)lysine).

The protein belongs to the class-III pyridoxal-phosphate-dependent aminotransferase family. HemL subfamily. In terms of assembly, homodimer. Requires pyridoxal 5'-phosphate as cofactor.

The protein resides in the cytoplasm. The enzyme catalyses (S)-4-amino-5-oxopentanoate = 5-aminolevulinate. The protein operates within porphyrin-containing compound metabolism; protoporphyrin-IX biosynthesis; 5-aminolevulinate from L-glutamyl-tRNA(Glu): step 2/2. The sequence is that of Glutamate-1-semialdehyde 2,1-aminomutase from Pseudomonas aeruginosa (strain UCBPP-PA14).